The sequence spans 270 residues: NAD kinase (270 aa).

Asp62 serves as the catalytic Proton acceptor. NAD(+) contacts are provided by residues 62–63 (DG), Arg67, 129–130 (ND), Lys140, Asp159, Ile167, 170–175 (TSYSFS), Ala194, and Gln227.

It belongs to the NAD kinase family. A divalent metal cation is required as a cofactor.

The protein localises to the cytoplasm. The catalysed reaction is NAD(+) + ATP = ADP + NADP(+) + H(+). Its function is as follows. Involved in the regulation of the intracellular balance of NAD and NADP, and is a key enzyme in the biosynthesis of NADP. Catalyzes specifically the phosphorylation on 2'-hydroxyl of the adenosine moiety of NAD to yield NADP. In Picrophilus torridus (strain ATCC 700027 / DSM 9790 / JCM 10055 / NBRC 100828 / KAW 2/3), this protein is NAD kinase.